We begin with the raw amino-acid sequence, 179 residues long: uncharacterized protein (179 aa).

Positions 1 to 10 (ATLSAGQPAS) are enriched in polar residues. Disordered stretches follow at residues 1–35 (ATLS…RGKC), 59–80 (VRRN…PIVT), and 131–179 (ECPT…STCR). A compositionally biased stretch (basic residues) spans 23–33 (LHRHPAPKRRG). Basic residues predominate over residues 149–158 (TPSRVRRSRR).

This is an uncharacterized protein from Human cytomegalovirus (strain AD169) (HHV-5).